We begin with the raw amino-acid sequence, 366 residues long: tRNA/tmRNA (uracil-C(5))-methyltransferase (366 aa).

Glutamine 189, tyrosine 217, asparagine 222, glutamate 238, and aspartate 298 together coordinate S-adenosyl-L-methionine. Residue cysteine 323 is the Nucleophile of the active site. Glutamate 357 acts as the Proton acceptor in catalysis.

Belongs to the class I-like SAM-binding methyltransferase superfamily. RNA M5U methyltransferase family. TrmA subfamily.

It catalyses the reaction uridine(54) in tRNA + S-adenosyl-L-methionine = 5-methyluridine(54) in tRNA + S-adenosyl-L-homocysteine + H(+). The enzyme catalyses uridine(341) in tmRNA + S-adenosyl-L-methionine = 5-methyluridine(341) in tmRNA + S-adenosyl-L-homocysteine + H(+). Its function is as follows. Dual-specificity methyltransferase that catalyzes the formation of 5-methyluridine at position 54 (m5U54) in all tRNAs, and that of position 341 (m5U341) in tmRNA (transfer-mRNA). The polypeptide is tRNA/tmRNA (uracil-C(5))-methyltransferase (Shewanella oneidensis (strain ATCC 700550 / JCM 31522 / CIP 106686 / LMG 19005 / NCIMB 14063 / MR-1)).